The primary structure comprises 730 residues: Arginine decarboxylase 1B, chloroplastic (730 aa).

The transit peptide at 1–37 (MPALGCCVDAAVSPPPGYSFLWDSSLPAPEIFPSGVP) directs the protein to the chloroplast. At lysine 157 the chain carries N6-(pyridoxal phosphate)lysine. Pyridoxal 5'-phosphate contacts are provided by residues serine 309, glycine 346, and 395–398 (ESGR). 460-461 (YA) contacts substrate. Catalysis depends on cysteine 548, which acts as the Proton donor; shared with dimeric partner. A substrate-binding site is contributed by aspartate 549. Tyrosine 590 is a binding site for pyridoxal 5'-phosphate.

It belongs to the Orn/Lys/Arg decarboxylase class-II family. SpeA subfamily. It depends on Mg(2+) as a cofactor. The cofactor is pyridoxal 5'-phosphate.

The protein resides in the plastid. Its subcellular location is the chloroplast. The catalysed reaction is L-arginine + H(+) = agmatine + CO2. It participates in alkaloid biosynthesis; nicotine biosynthesis. The protein operates within amine and polyamine biosynthesis; agmatine biosynthesis; agmatine from L-arginine: step 1/1. Functionally, involved in the biosynthesis of pyridine alkaloid natural products, leading mainly to the production of anabasine, anatabine, nicotine and nornicotine, effective deterrents against herbivores with antiparasitic and pesticide properties (neurotoxins); nornicotine serves as the precursor in the synthesis of the carcinogen compound N'-nitrosonornicotine (NNN). Required for the biosynthesis of putrescine. Catalyzes the first step of polyamine (PA) biosynthesis to produce putrescine from arginine. The protein is Arginine decarboxylase 1B, chloroplastic of Nicotiana tabacum (Common tobacco).